An 893-amino-acid chain; its full sequence is DNA gyrase subunit A (893 aa).

Positions 35-501 constitute a Topo IIA-type catalytic domain; that stretch reads LPDVRDGLKP…GLEDLEDEDL (467 aa). The active-site O-(5'-phospho-DNA)-tyrosine intermediate is the tyrosine 123. Positions 528-534 match the GyrA-box motif; it reads QNRGGRG. Positions 810–893 are disordered; that stretch reads VNEEDDNEEN…ASDNEEDSDE (84 aa). Acidic residues-rich tracts occupy residues 812–821 and 852–862; these read EEDDNEENAD and DAEMESVESPE. Over residues 863-879 the composition is skewed to basic and acidic residues; it reads NDDRIDIRQDFMDRVNE. Over residues 880 to 893 the composition is skewed to acidic residues; sequence DIESASDNEEDSDE.

It belongs to the type II topoisomerase GyrA/ParC subunit family. As to quaternary structure, heterotetramer, composed of two GyrA and two GyrB chains. In the heterotetramer, GyrA contains the active site tyrosine that forms a transient covalent intermediate with DNA, while GyrB binds cofactors and catalyzes ATP hydrolysis.

The protein localises to the cytoplasm. The catalysed reaction is ATP-dependent breakage, passage and rejoining of double-stranded DNA.. Functionally, a type II topoisomerase that negatively supercoils closed circular double-stranded (ds) DNA in an ATP-dependent manner to modulate DNA topology and maintain chromosomes in an underwound state. Negative supercoiling favors strand separation, and DNA replication, transcription, recombination and repair, all of which involve strand separation. Also able to catalyze the interconversion of other topological isomers of dsDNA rings, including catenanes and knotted rings. Type II topoisomerases break and join 2 DNA strands simultaneously in an ATP-dependent manner. The sequence is that of DNA gyrase subunit A from Staphylococcus epidermidis (strain ATCC 35984 / DSM 28319 / BCRC 17069 / CCUG 31568 / BM 3577 / RP62A).